The following is an 811-amino-acid chain: U-box domain-containing protein 43 (811 aa).

A U-box domain is found at 24–103 (NIYEAFICPL…EEWRARNDAL (80 aa)). ARM repeat units lie at residues 136 to 175 (RKIRQRVCNPQLVRLITDMLKSSSHEVRCKALQTLQVVVE), 178 to 217 (EESKAIVAEGDTVRTIVKFLSQEPSKGREAAVSVLFELSK), 220 to 261 (ALCE…NLER), 263 to 302 (EENVRQMAINGRLQPLLAKLLEGSPETKVSMAFYLGVLAL), 303 to 342 (NNDVKVIVAQTVGSSLIDLMRTRDMSQREAALGALNNISS), 344 to 388 (EGSA…NIVN), 399 to 438 (GPHHQTLVSEEIVENLLQLTSNTGPEIQGKLLAVLVGLTS), 444 to 484 (INVV…NISP), and 489 to 528 (ELANALRSTVGQLGSLVSIISENTPTITEEQAAAAGLLAE).

It catalyses the reaction S-ubiquitinyl-[E2 ubiquitin-conjugating enzyme]-L-cysteine + [acceptor protein]-L-lysine = [E2 ubiquitin-conjugating enzyme]-L-cysteine + N(6)-ubiquitinyl-[acceptor protein]-L-lysine.. The protein operates within protein modification; protein ubiquitination. Functions as an E3 ubiquitin ligase. The sequence is that of U-box domain-containing protein 43 (PUB43) from Arabidopsis thaliana (Mouse-ear cress).